The chain runs to 561 residues: DNA ligase B (561 aa).

Catalysis depends on K128, which acts as the N6-AMP-lysine intermediate.

It belongs to the NAD-dependent DNA ligase family. LigB subfamily.

The catalysed reaction is NAD(+) + (deoxyribonucleotide)n-3'-hydroxyl + 5'-phospho-(deoxyribonucleotide)m = (deoxyribonucleotide)n+m + AMP + beta-nicotinamide D-nucleotide.. In terms of biological role, catalyzes the formation of phosphodiester linkages between 5'-phosphoryl and 3'-hydroxyl groups in double-stranded DNA using NAD as a coenzyme and as the energy source for the reaction. The chain is DNA ligase B from Pseudomonas syringae pv. tomato (strain ATCC BAA-871 / DC3000).